We begin with the raw amino-acid sequence, 43 residues long: Protein PsbN (43 aa).

A helical transmembrane segment spans residues 5–27 (NLVTISISCLLVSLTGYAIYTSF).

Belongs to the PsbN family.

Its subcellular location is the plastid. The protein localises to the chloroplast thylakoid membrane. In terms of biological role, may play a role in photosystem I and II biogenesis. The protein is Protein PsbN of Gnetum gnemon (Spanish joint-fir).